The primary structure comprises 676 residues: UvrABC system protein C (676 aa).

The region spanning 16 to 95 (VEPGVYRFRD…IKEFDPRFNI (80 aa)) is the GIY-YIG domain. The UVR domain maps to 208 to 243 (DRLVRDLERKMTAAAEDLDFERAARLRDDIGALRRA).

It belongs to the UvrC family. As to quaternary structure, interacts with UvrB in an incision complex.

The protein localises to the cytoplasm. Functionally, the UvrABC repair system catalyzes the recognition and processing of DNA lesions. UvrC both incises the 5' and 3' sides of the lesion. The N-terminal half is responsible for the 3' incision and the C-terminal half is responsible for the 5' incision. This chain is UvrABC system protein C, found in Mycobacterium sp. (strain JLS).